The following is a 61-amino-acid chain: Small ribosomal subunit protein uS14B (61 aa).

Zn(2+) contacts are provided by C24, C27, C40, and C43.

It belongs to the universal ribosomal protein uS14 family. Zinc-binding uS14 subfamily. In terms of assembly, part of the 30S ribosomal subunit. Contacts proteins S3 and S10. It depends on Zn(2+) as a cofactor.

Functionally, binds 16S rRNA, required for the assembly of 30S particles and may also be responsible for determining the conformation of the 16S rRNA at the A site. The chain is Small ribosomal subunit protein uS14B from Streptococcus agalactiae serotype Ia (strain ATCC 27591 / A909 / CDC SS700).